Here is a 244-residue protein sequence, read N- to C-terminus: Mannose-binding protein C (244 aa).

Residues 1-18 (MSLFTSFLLLCVLTAVYA) form the signal peptide. A Collagen-like domain is found at 38–96 (GLNGFPGKDGHDGAKGEKGEPGQGLRGLQGPPGKVGPAGPPGNPGSKGATGPKGDRGES). Pro43 is modified (4-hydroxyproline). The tract at residues 43–99 (PGKDGHDGAKGEKGEPGQGLRGLQGPPGKVGPAGPPGNPGSKGATGPKGDRGESVEF) is disordered. Basic and acidic residues predominate over residues 45–57 (KDGHDGAKGEKGE). Pro58, Pro69, Pro78, and Pro81 each carry 4-hydroxyproline. A compositionally biased stretch (low complexity) spans 65–74 (LQGPPGKVGP). Residues 108–126 (IAALRSELRAMRKWVLLSM) are a coiled coil. Positions 129–241 (NVGKKYFMSS…CSDSFLVVCE (113 aa)) constitute a C-type lectin domain. 2 cysteine pairs are disulfide-bonded: Cys151–Cys240 and Cys218–Cys232.

In terms of assembly, oligomeric complex of 3 or more homotrimers. Interacts with MASP1 and MASP2. Interacts with MEP1A and MEP1B and may inhibit their catalytic activity.

It is found in the secreted. Calcium-dependent lectin involved in innate immune defense. Binds mannose, fucose and N-acetylglucosamine on different microorganisms and activates the lectin complement pathway. Binds to late apoptotic cells, as well as to apoptotic blebs and to necrotic cells, but not to early apoptotic cells, facilitating their uptake by macrophages. This chain is Mannose-binding protein C (Mbl2), found in Rattus norvegicus (Rat).